The sequence spans 291 residues: MAYVSMKQMLETGVHFGHQTRRWNPKMRPYIFGARNGIHIIDLQQTVKLYRAAHDKIVETVAAGGSVLFVGTKRQAQEAIATEATRAGQYYVANRWMGGTLTNFSTIQKSIERLNRLETMFSDGSVNRYQKKEILTLNREMDKLELTLGGIKNMERLPQLIFIIDPHRENIAVKEGRKLGIPIMAVTDTNCDPDLIDYIIPGNDDAIRAIKLFVTAMADACIEGEALQKDTKNKNLEEELKQIATAECNKESTSIEQELIIASEQTETKENNIEESVSEVVITNESELITE.

It belongs to the universal ribosomal protein uS2 family.

This is Small ribosomal subunit protein uS2 from Lawsonia intracellularis (strain PHE/MN1-00).